Here is a 434-residue protein sequence, read N- to C-terminus: Eukaryotic peptide chain release factor subunit 1-2 (434 aa).

An N-acetylalanine modification is found at Ala2.

The protein belongs to the eukaryotic release factor 1 family. As to quaternary structure, heterodimer of two subunits, one of which binds GTP.

The protein resides in the cytoplasm. Directs the termination of nascent peptide synthesis (translation) in response to the termination codons UAA, UAG and UGA. Modulates plant growth and development. In Arabidopsis thaliana (Mouse-ear cress), this protein is Eukaryotic peptide chain release factor subunit 1-2.